A 215-amino-acid polypeptide reads, in one-letter code: Large ribosomal subunit protein uL3 (215 aa).

Residues 136–155 (GVSISHRSHGSTGQRQDPGK) are disordered. N5-methylglutamine is present on glutamine 151.

The protein belongs to the universal ribosomal protein uL3 family. As to quaternary structure, part of the 50S ribosomal subunit. Forms a cluster with proteins L14 and L19. Methylated by PrmB.

In terms of biological role, one of the primary rRNA binding proteins, it binds directly near the 3'-end of the 23S rRNA, where it nucleates assembly of the 50S subunit. The sequence is that of Large ribosomal subunit protein uL3 from Rickettsia africae (strain ESF-5).